Here is a 328-residue protein sequence, read N- to C-terminus: MMWRWSFLLLLLLLRHWALGKPSPDAGPHGQDRVHHGTPLSEAPHDDAHGNFQYDHEAFLGRDVAKEFDKLSPEESQARLGRIVDRMDLAGDSDGWVSLAELRAWIAHTQQRHIRDSVSAAWHTYDTDRDGRVGWEELRNATYGHYEPGEEFHDVEDAETYKKMLARDERRFRVADQDGDSMATREELTAFLHPEEFPHMRDIVVAETLEDLDKNKDGYVQVEEYIADLYSEEPGEEEPAWVQTERQQFREFRDLNKDGRLDGSEVGYWVLPPSQDQPLVEANHLLHESDTDKDGRLSKAEILSNWNMFVGSQATNYGEDLTRHHDEL.

An N-terminal signal peptide occupies residues 1 to 20; that stretch reads MMWRWSFLLLLLLLRHWALG. Positions 24 to 48 are disordered; the sequence is PDAGPHGQDRVHHGTPLSEAPHDDA. EF-hand domains lie at 77–112, 113–148, 163–198, 200–235, 241–276, and 277–312; these read QARL…TQQR, HIRD…HYEP, KMLA…EEFP, MRDI…EEPG, WVQT…PSQD, and QPLV…FVGS. The Ca(2+) site is built by D92, D94, W96, E101, D126, D128, D130, R132, and E137. An N-linked (GlcNAc...) asparagine glycan is attached at N140. Positions 176, 178, 180, 182, 187, 213, 215, 217, 219, 224, 254, 256, 258, 260, 265, 290, 292, 294, 296, and 301 each coordinate Ca(2+). Residues 325 to 328 carry the Prevents secretion from ER motif; the sequence is HDEL.

It belongs to the CREC family. As to quaternary structure, interacts with PCSK6 (immature form including the propeptide); probably involved in the maturation and the secretion of PCSK6. Degraded by PCSK6 and other endoproteases including FURIN and PCSK5. In terms of processing, N-glycosylated. As to expression, highly expressed in lung and heart. Also detected in liver, spleen, kidney, skeletal muscle, intestine, stomach, and brain.

It localises to the endoplasmic reticulum lumen. Its function is as follows. Probable molecular chaperone assisting protein biosynthesis and transport in the endoplasmic reticulum. Required for the proper biosynthesis and transport of pulmonary surfactant-associated protein A/SP-A, pulmonary surfactant-associated protein D/SP-D and the lipid transporter ABCA3. By regulating both the proper expression and the degradation through the endoplasmic reticulum-associated protein degradation pathway of these proteins plays a crucial role in pulmonary surfactant homeostasis. Has an anti-fibrotic activity by negatively regulating the secretion of type I and type III collagens. This calcium-binding protein also transiently associates with immature PCSK6 and regulates its secretion. The chain is Reticulocalbin-3 from Mus musculus (Mouse).